The following is a 171-amino-acid chain: Ribosome maturation factor RimP (171 aa).

The protein belongs to the RimP family.

It is found in the cytoplasm. Required for maturation of 30S ribosomal subunits. The polypeptide is Ribosome maturation factor RimP (Anaeromyxobacter dehalogenans (strain 2CP-C)).